The following is a 291-amino-acid chain: Transcription antitermination protein NusB (291 aa).

This sequence belongs to the NusB family.

In terms of biological role, involved in transcription antitermination. Required for transcription of ribosomal RNA (rRNA) genes. Binds specifically to the boxA antiterminator sequence of the ribosomal RNA (rrn) operons. This Synechococcus sp. (strain JA-2-3B'a(2-13)) (Cyanobacteria bacterium Yellowstone B-Prime) protein is Transcription antitermination protein NusB.